The sequence spans 104 residues: Gallinacin-11 (104 aa).

The first 22 residues, Met1–Gly22, serve as a signal peptide directing secretion. 3 disulfide bridges follow: Cys30–Cys60, Cys37–Cys53, and Cys43–Cys61.

Belongs to the beta-defensin family. As to expression, detected in outer membrane of the vitelline layer of the egg (at protein level). Expressed in the liver, gall bladder, kidney, testis, ovary and male and female reproductive tracts. Expressed in the ovarian stroma, but not in the ovarian follicles. No expression is detected in bone marrow.

The protein resides in the secreted. It localises to the cytoplasmic granule. Has bactericidal activity. In Gallus gallus (Chicken), this protein is Gallinacin-11 (GAL11).